The following is a 221-amino-acid chain: Ribose-5-phosphate isomerase A (221 aa).

Substrate-binding positions include 26 to 29 (TGST), 81 to 84 (DGAD), and 94 to 97 (KGGG). The Proton acceptor role is filled by glutamate 103. Lysine 121 is a substrate binding site.

The protein belongs to the ribose 5-phosphate isomerase family. As to quaternary structure, homodimer.

It catalyses the reaction aldehydo-D-ribose 5-phosphate = D-ribulose 5-phosphate. Its pathway is carbohydrate degradation; pentose phosphate pathway; D-ribose 5-phosphate from D-ribulose 5-phosphate (non-oxidative stage): step 1/1. Its function is as follows. Catalyzes the reversible conversion of ribose-5-phosphate to ribulose 5-phosphate. The chain is Ribose-5-phosphate isomerase A from Bacillus mycoides (strain KBAB4) (Bacillus weihenstephanensis).